We begin with the raw amino-acid sequence, 170 residues long: MKEAYLYIVEKSVAWEFDSPEYGRLARKVVELLYDRKEDLTDDRVAILLNISTAETRRILQYLMKLGLVGVKKRTTEDYRIEYTWYVDDDVIRQAIKNRAKVAKEKISSLIKSLTEGAYYVCPTCHMRYTLDQAVNYGGVCPVCGTQLEYVENVEEIDKLTKAYESIDKI.

The HTH TFE/IIEalpha-type domain maps to 1 to 93; that stretch reads MKEAYLYIVE…TWYVDDDVIR (93 aa).

It belongs to the TFE family. Monomer. Interaction with RNA polymerase subunits RpoF and RpoE is necessary for Tfe stimulatory transcription activity. Able to interact with Tbp and RNA polymerase in the absence of DNA promoter. Interacts both with the preinitiation and elongation complexes.

In terms of biological role, transcription factor that plays a role in the activation of archaeal genes transcribed by RNA polymerase. Facilitates transcription initiation by enhancing TATA-box recognition by TATA-box-binding protein (Tbp), and transcription factor B (Tfb) and RNA polymerase recruitment. Not absolutely required for transcription in vitro, but particularly important in cases where Tbp or Tfb function is not optimal. It dynamically alters the nucleic acid-binding properties of RNA polymerases by stabilizing the initiation complex and destabilizing elongation complexes. Seems to translocate with the RNA polymerase following initiation and acts by binding to the non template strand of the transcription bubble in elongation complexes. The polypeptide is Transcription factor E (Pyrobaculum neutrophilum (strain DSM 2338 / JCM 9278 / NBRC 100436 / V24Sta) (Thermoproteus neutrophilus)).